A 439-amino-acid chain; its full sequence is FBD-associated F-box protein At5g56380 (439 aa).

The 61-residue stretch at 1 to 61 (MDRISHLADE…LPETWGYQEP (61 aa)) folds into the F-box domain. Residues 358 to 406 (WNQPGSVPRCLSSSLETLEWVEYGGTHEEKELSTYLFKTAVCFKKASFT) form the FBD domain.

The protein is FBD-associated F-box protein At5g56380 of Arabidopsis thaliana (Mouse-ear cress).